A 398-amino-acid chain; its full sequence is E3 ubiquitin-protein ligase MARCHF11 (398 aa).

A compositionally biased stretch (basic and acidic residues) spans 1–14 (MSDEGSKRGSRADS). The segment at 1 to 158 (MSDEGSKRGS…GSGDQRSGHQ (158 aa)) is disordered. The span at 19–31 (PPLPPPPPPPPPG) shows a compositional bias: pro residues. 2 stretches are compositionally biased toward basic and acidic residues: residues 94 to 104 (EGPRRLPEVKL) and 121 to 130 (ACREGERRGT). Residues 158–218 (QHQHHQPICK…ELCCYRYHVT (61 aa)) form an RING-CH-type zinc finger. The Zn(2+) site is built by cysteine 166, cysteine 169, cysteine 182, cysteine 184, histidine 192, cysteine 195, cysteine 208, and cysteine 211. The next 2 membrane-spanning stretches (helical) occupy residues 241–261 (MIAV…LLWS) and 274–294 (ILFQ…IGLI). Residues 367–370 (YVLL) carry the YXXL motif motif. The PDZ-binding motif lies at 395–398 (VTSV).

As to quaternary structure, interacts (YXXL motif) with AP1M1. Interacts (via PDZ-binding motif) with LIN7A. Interacts with unidentified fucose glycoproteins. Predominantly expressed in testis. Present in early developing spermatids. Not present in spermatogonia, spermatocytes or somatic cells (i.e. peritubular, Leydig, and Sertoli cells). Present in early round spermatids at step 4, remains until step 11, then it decreases at steps 12-15, and diminishes after step 16 (at protein level). Also expressed at lower level in brain.

It is found in the cytoplasmic vesicle membrane. The enzyme catalyses S-ubiquitinyl-[E2 ubiquitin-conjugating enzyme]-L-cysteine + [acceptor protein]-L-lysine = [E2 ubiquitin-conjugating enzyme]-L-cysteine + N(6)-ubiquitinyl-[acceptor protein]-L-lysine.. It participates in protein modification; protein ubiquitination. Its function is as follows. E3 ubiquitin-protein ligase that mediates polyubiquitination of CD4. E3 ubiquitin ligases accept ubiquitin from an E2 ubiquitin-conjugating enzyme in the form of a thioester and then directly transfer the ubiquitin to targeted substrates. May play a role in ubuquitin-dependent protein sorting in developmenting spermatids. This Rattus norvegicus (Rat) protein is E3 ubiquitin-protein ligase MARCHF11 (Marchf11).